Reading from the N-terminus, the 799-residue chain is Armadillo repeat-containing protein wrm-1 (799 aa).

Residues Met-1–Lys-10 are compositionally biased toward basic and acidic residues. The interval Met-1–Pro-60 is disordered. Residues Pro-26 to Ala-43 are compositionally biased toward polar residues. The stretch at Glu-454–Gly-496 is one ARM repeat.

As to quaternary structure, interacts (independently of ARM repeat) with nhr-25. Component of the beta-catenin-lit-1 complex (also called the lit-1/wrm-1 complex or the wrm-1/lit-1 kinase complex) at least composed of lit-1 and wrm-1. Interacts (via N-terminus) with lit-1; the interaction is direct and activates lit-1 kinase activity which leads to the phosphorylation of pop-1. This promotes pop-1 interaction with par-5 and translocation of pop-1 from the nucleus to the cytoplasm.

Its subcellular location is the cytoplasm. It localises to the cell cortex. The protein localises to the nucleus. Antagonistic role in the Wnt signaling pathway that operates in embryogenesis. When located at the cortex it has been shown to inhibit Wnt signaling during asymmetric cell division but when relocated to the nucleus it shows positive regulation. Has a role in blastomere signaling during endoderm specification. Component of the beta-catenin-lit-1 complex which promotes phosphorylation, down-regulation and subcellular relocation of pop-1. Within the complex, activates lit-1-dependent kinase activity. Can substitute for bar-1 indicating functional redundancy. Appears to have a role in centrosome positioning. Involved in the development of distal tip cells (DTC) by regulating the asymmetric distribution of cye-1 and cki-1 between the daughters of Z1.a and Z4.p cells. The sequence is that of Armadillo repeat-containing protein wrm-1 from Caenorhabditis briggsae.